A 629-amino-acid chain; its full sequence is Microtubule-associated protein 70-3 (629 aa).

The disordered stretch occupies residues 1–54 (MEEGGYAFEVNNGRPTASEFGTTARISSPSLTMSSSFREGGGGGGSKGLTRRRS). Positions 13–33 (GRPTASEFGTTARISSPSLTM) are enriched in polar residues. Residues 75–375 (VKVELNRLEN…ADRAAKSEAQ (301 aa)) are a coiled coil. The segment at 257–493 (ILDKLHRQKV…FPLNQSSEGT (237 aa)) is required for targeting to microtubules. Disordered regions lie at residues 391 to 421 (LRGP…LGGA), 458 to 519 (GTSR…DSVP), and 578 to 629 (AMEK…RSTQ). The segment covering 393–416 (GPSSSGNRSTPEGRSMSNGPSRRQ) has biased composition (polar residues). Residues 544 to 592 (LRDKDEAIEMLAKKVETLTKAMEVEAKKMRREVAAMEKEVSAMRVDNKG) are a coiled coil. Basic and acidic residues predominate over residues 578–596 (AMEKEVSAMRVDNKGSDSR). Residues 603–613 (NSKGASTTAQL) show a composition bias toward polar residues.

Belongs to the MAP70 family.

The protein resides in the cytoplasm. The protein localises to the cytoskeleton. Its function is as follows. Plant-specific protein that interact with microtubules. The sequence is that of Microtubule-associated protein 70-3 (MAP70.3) from Arabidopsis thaliana (Mouse-ear cress).